Reading from the N-terminus, the 255-residue chain is LRLLLKLLLLLLGQQKHWPERQQQQQPQPWLDRQQQQQQHNQQLQKQQWPEGQRQQLWPEQQQQQWPEQHQQAQQQQQWPQQQPQMQQEQWPQQQPQVQQQQQWPQQQHRRQHGQQQQCMNSQQQLQQCGQQQQQQLQQQWSEQQQQQQQQQWPEQPEQQQQQQWPEQQQQQWSDQNQQQQAQQWQAQQQQQWPQQQQQPQQQQQQQQQQDLGPDGVGIVVPYLGSSPADFEVQNLGVSVLPRIKLPLPKFDNDD.

A run of 12 repeats spans residues 18 to 48 (WPERQQQQQPQPWLDRQQQQQQHNQQLQKQQ), 49 to 57 (WPEGQRQQL), 58 to 65 (WPEQQQQQ), 66 to 78 (WPEQHQQAQQQQQ), 79 to 90 (WPQQQPQMQQEQ), 91 to 103 (WPQQQPQVQQQQQ), 104 to 140 (WPQQQHRRQHGQQQQCMNSQQQLQQCGQQQQQQLQQQ), 141 to 152 (WSEQQQQQQQQQ), 153 to 164 (WPEQPEQQQQQQ), 165 to 172 (WPEQQQQQ), 173 to 192 (WSDQNQQQQAQQWQAQQQQQ), and 193 to 210 (WPQQQQQPQQQQQQQQQQ). Positions 18 to 90 (WPERQQQQQP…QQQPQMQQEQ (73 aa)) are disordered. The tract at residues 18–210 (WPERQQQQQP…QQQQQQQQQQ (193 aa)) is 12 X approximate tandem repeats, Gln-rich. Over residues 149-210 (QQQQWPEQPE…QQQQQQQQQQ (62 aa)) the composition is skewed to low complexity. The tract at residues 149-224 (QQQQWPEQPE…DGVGIVVPYL (76 aa)) is disordered.

May be covalently linked by disulfide bonds to other polypeptides to form the 80 kDa antigen.

In terms of biological role, unknown. The Gln-rich tandem repeats may be important for an unknown aspect of the parasitic life cycle. May be an important immunogen. In Eimeria tenella (Coccidian parasite), this protein is Antigen LPMC-61.